An 88-amino-acid polypeptide reads, in one-letter code: Kunitz-type U15-theraphotoxin-Hhn1c (88 aa).

The N-terminal stretch at methionine 1–alanine 27 is a signal peptide. A propeptide spanning residues glutamate 28–arginine 33 is cleaved from the precursor. One can recognise a BPTI/Kunitz inhibitor domain in the interval cysteine 37 to cysteine 85. 2 disulfides stabilise this stretch: cysteine 37–cysteine 85 and cysteine 60–cysteine 81.

This sequence belongs to the venom Kunitz-type family. 03 (sub-Kunitz) subfamily. Expressed by the venom gland.

Its subcellular location is the secreted. Its function is as follows. Serine protease inhibitor that inhibits trypsin at a molar ratio of 1:1. This chain is Kunitz-type U15-theraphotoxin-Hhn1c, found in Cyriopagopus hainanus (Chinese bird spider).